Reading from the N-terminus, the 204-residue chain is Peptidyl-tRNA hydrolase (204 aa).

Tyr-19 is a tRNA binding site. The active-site Proton acceptor is His-24. TRNA contacts are provided by Tyr-70, Asn-72, and Asn-118.

Belongs to the PTH family. As to quaternary structure, monomer.

It localises to the cytoplasm. The enzyme catalyses an N-acyl-L-alpha-aminoacyl-tRNA + H2O = an N-acyl-L-amino acid + a tRNA + H(+). In terms of biological role, hydrolyzes ribosome-free peptidyl-tRNAs (with 1 or more amino acids incorporated), which drop off the ribosome during protein synthesis, or as a result of ribosome stalling. Its function is as follows. Catalyzes the release of premature peptidyl moieties from peptidyl-tRNA molecules trapped in stalled 50S ribosomal subunits, and thus maintains levels of free tRNAs and 50S ribosomes. The chain is Peptidyl-tRNA hydrolase from Prochlorococcus marinus (strain SARG / CCMP1375 / SS120).